The primary structure comprises 284 residues: METKILDGLKISKKIIKKIKKKIEKRKKKRKKIPGLAMIVIGNNPASLIYVNKKREACNQAGFFSIYWHLSNQIEEIELINLIKKLNKNKCIDGILIQLPLPIKINYLKIITSIDPKKDVDGFHPYNLGSLCQNNPQFRSCTSKGVITLLKKYKINIHGLYAVIIGSSNIVGKPMYMELLLAGCTVTIVNKNTKNIKTYVKKADLVVIAIGQPNFLYGHWIKLGAIVIDIGINYLYNKNKYKIVGDVHFKSTSVKTSYITPVPGGVGPMTVVSLLENTLQACIM.

NADP(+) contacts are provided by residues 166-168 (GSS) and Ile232.

It belongs to the tetrahydrofolate dehydrogenase/cyclohydrolase family. In terms of assembly, homodimer.

It catalyses the reaction (6R)-5,10-methylene-5,6,7,8-tetrahydrofolate + NADP(+) = (6R)-5,10-methenyltetrahydrofolate + NADPH. The enzyme catalyses (6R)-5,10-methenyltetrahydrofolate + H2O = (6R)-10-formyltetrahydrofolate + H(+). It functions in the pathway one-carbon metabolism; tetrahydrofolate interconversion. Functionally, catalyzes the oxidation of 5,10-methylenetetrahydrofolate to 5,10-methenyltetrahydrofolate and then the hydrolysis of 5,10-methenyltetrahydrofolate to 10-formyltetrahydrofolate. This chain is Bifunctional protein FolD, found in Buchnera aphidicola subsp. Cinara cedri (strain Cc).